Consider the following 308-residue polypeptide: GTP cyclohydrolase FolE2 (308 aa).

It belongs to the GTP cyclohydrolase IV family.

The enzyme catalyses GTP + H2O = 7,8-dihydroneopterin 3'-triphosphate + formate + H(+). It participates in cofactor biosynthesis; 7,8-dihydroneopterin triphosphate biosynthesis; 7,8-dihydroneopterin triphosphate from GTP: step 1/1. Converts GTP to 7,8-dihydroneopterin triphosphate. This is GTP cyclohydrolase FolE2 from Idiomarina loihiensis (strain ATCC BAA-735 / DSM 15497 / L2-TR).